A 118-amino-acid chain; its full sequence is uncharacterized protein (118 aa).

Residues 6–104 (CGFEVTKEVI…WGGYYAEQEY (99 aa)) enclose the HTH hxlR-type domain.

This is an uncharacterized protein from Bacillus subtilis (strain 168).